A 358-amino-acid chain; its full sequence is tRNA-specific 2-thiouridylase MnmA (358 aa).

ATP-binding positions include 6 to 13 (AMSGGVDS) and Leu-32. Cys-101 acts as the Nucleophile in catalysis. Cys-101 and Cys-193 form a disulfide bridge. Gly-125 contributes to the ATP binding site. Positions 143-145 (KDQ) are interaction with tRNA. Cys-193 serves as the catalytic Cysteine persulfide intermediate.

It belongs to the MnmA/TRMU family.

It localises to the cytoplasm. The catalysed reaction is S-sulfanyl-L-cysteinyl-[protein] + uridine(34) in tRNA + AH2 + ATP = 2-thiouridine(34) in tRNA + L-cysteinyl-[protein] + A + AMP + diphosphate + H(+). Functionally, catalyzes the 2-thiolation of uridine at the wobble position (U34) of tRNA, leading to the formation of s(2)U34. The polypeptide is tRNA-specific 2-thiouridylase MnmA (Mycobacterium leprae (strain Br4923)).